The primary structure comprises 653 residues: Chaperone protein HtpG (653 aa).

Residues 1-361 (MSETNQVQNH…SNDLPLNVSR (361 aa)) are a; substrate-binding. Residues 362–578 (EILQDNKVTQ…DDDMSSQMAK (217 aa)) form a b region. A c region spans residues 579 to 653 (LMASVGQEVP…LNKLMLSLTK (75 aa)).

The protein belongs to the heat shock protein 90 family. As to quaternary structure, homodimer.

It is found in the cytoplasm. Functionally, molecular chaperone. Has ATPase activity. The sequence is that of Chaperone protein HtpG from Colwellia psychrerythraea (strain 34H / ATCC BAA-681) (Vibrio psychroerythus).